Reading from the N-terminus, the 199-residue chain is NAD(P)H dehydrogenase (quinone) (199 aa).

The Flavodoxin-like domain occupies 4-190 (VLVLYYSAYG…NGARYQGRTI (187 aa)). Residues 10–15 (SAYGHI) and 78–80 (TRF) each bind FMN. Y12 lines the NAD(+) pocket. W98 lines the substrate pocket. Residues 113 to 119 (STATQHG) and H134 contribute to the FMN site.

The protein belongs to the WrbA family. FMN is required as a cofactor.

It catalyses the reaction a quinone + NADH + H(+) = a quinol + NAD(+). The catalysed reaction is a quinone + NADPH + H(+) = a quinol + NADP(+). The polypeptide is NAD(P)H dehydrogenase (quinone) (Afipia carboxidovorans (strain ATCC 49405 / DSM 1227 / KCTC 32145 / OM5) (Oligotropha carboxidovorans)).